The sequence spans 370 residues: Aminomethyltransferase (370 aa).

This sequence belongs to the GcvT family. As to quaternary structure, the glycine cleavage system is composed of four proteins: P, T, L and H.

It catalyses the reaction N(6)-[(R)-S(8)-aminomethyldihydrolipoyl]-L-lysyl-[protein] + (6S)-5,6,7,8-tetrahydrofolate = N(6)-[(R)-dihydrolipoyl]-L-lysyl-[protein] + (6R)-5,10-methylene-5,6,7,8-tetrahydrofolate + NH4(+). Functionally, the glycine cleavage system catalyzes the degradation of glycine. The protein is Aminomethyltransferase of Clostridium botulinum (strain Loch Maree / Type A3).